Here is a 71-residue protein sequence, read N- to C-terminus: Small ribosomal subunit protein bS21 (71 aa).

The segment at 48–71 (ENATLAKRHAKRNARENARNTRLY) is disordered. The segment covering 60–71 (NARENARNTRLY) has biased composition (basic and acidic residues).

The protein belongs to the bacterial ribosomal protein bS21 family.

This Haemophilus influenzae (strain 86-028NP) protein is Small ribosomal subunit protein bS21.